The chain runs to 604 residues: UvrABC system protein C (604 aa).

A GIY-YIG domain is found at Glu10 to Ile89. The 36-residue stretch at Ser199–Leu234 folds into the UVR domain.

This sequence belongs to the UvrC family. In terms of assembly, interacts with UvrB in an incision complex.

It is found in the cytoplasm. Functionally, the UvrABC repair system catalyzes the recognition and processing of DNA lesions. UvrC both incises the 5' and 3' sides of the lesion. The N-terminal half is responsible for the 3' incision and the C-terminal half is responsible for the 5' incision. In Methanococcoides burtonii (strain DSM 6242 / NBRC 107633 / OCM 468 / ACE-M), this protein is UvrABC system protein C.